Reading from the N-terminus, the 460-residue chain is ATP synthase subunit beta (460 aa).

150-157 is a binding site for ATP; sequence GGAGVGKT.

Belongs to the ATPase alpha/beta chains family. F-type ATPases have 2 components, CF(1) - the catalytic core - and CF(0) - the membrane proton channel. CF(1) has five subunits: alpha(3), beta(3), gamma(1), delta(1), epsilon(1). CF(0) has three main subunits: a(1), b(2) and c(9-12). The alpha and beta chains form an alternating ring which encloses part of the gamma chain. CF(1) is attached to CF(0) by a central stalk formed by the gamma and epsilon chains, while a peripheral stalk is formed by the delta and b chains.

It localises to the cell inner membrane. It carries out the reaction ATP + H2O + 4 H(+)(in) = ADP + phosphate + 5 H(+)(out). Produces ATP from ADP in the presence of a proton gradient across the membrane. The catalytic sites are hosted primarily by the beta subunits. This chain is ATP synthase subunit beta, found in Salmonella agona (strain SL483).